Consider the following 502-residue polypeptide: AMP phosphorylase (502 aa).

Residues Gly-168, 195-200 (SRAITS), and Thr-204 each bind AMP. Asp-257 (proton donor) is an active-site residue. AMP-binding residues include Ser-265 and Lys-289.

Belongs to the thymidine/pyrimidine-nucleoside phosphorylase family. Type 2 subfamily.

It carries out the reaction AMP + phosphate = alpha-D-ribose 1,5-bisphosphate + adenine. The catalysed reaction is CMP + phosphate = cytosine + alpha-D-ribose 1,5-bisphosphate. The enzyme catalyses UMP + phosphate = alpha-D-ribose 1,5-bisphosphate + uracil. Its function is as follows. Catalyzes the conversion of AMP and phosphate to adenine and ribose 1,5-bisphosphate (R15P). Exhibits phosphorylase activity toward CMP and UMP in addition to AMP. Functions in an archaeal AMP degradation pathway, together with R15P isomerase and RubisCO. This chain is AMP phosphorylase, found in Hyperthermus butylicus (strain DSM 5456 / JCM 9403 / PLM1-5).